A 199-amino-acid chain; its full sequence is Secreted chorismate mutase (199 aa).

Residues 1–33 (MLTRPREIYLATAVSIGILLSLIAPLGPPLARA) form the signal peptide. Residues 34–113 (DGTSQLAELV…ATEAIEYSRF (80 aa)) form the Chorismate mutase domain. Substrate is bound by residues arginine 49, lysine 60, aspartate 69, 72–76 (RVEQQ), 105–109 (TEAIE), and arginine 134. Cysteine 160 and cysteine 193 are disulfide-bonded.

Homodimer.

It is found in the secreted. It catalyses the reaction chorismate = prephenate. The protein operates within metabolic intermediate biosynthesis; prephenate biosynthesis; prephenate from chorismate: step 1/1. Tyrosine, phenylalanine, and tryptophan moderately enhance chorismate mutase activity at low concentrations, but allosterically inhibit the enzyme at higher concentrations. Its function is as follows. Catalyzes the Claisen rearrangement of chorismate to prephenate. May play some role in the pathogenicity. The polypeptide is Secreted chorismate mutase (Mycobacterium tuberculosis (strain ATCC 25618 / H37Rv)).